We begin with the raw amino-acid sequence, 315 residues long: Ninja-family protein 1 (315 aa).

Disordered stretches follow at residues 1-28 (MASR…AGEA), 68-142 (SLPG…AQEP), and 156-237 (DQGN…TGDL). The span at 99-108 (ERWRRREMQS) shows a compositional bias: basic and acidic residues. Positions 156 to 166 (DQGNPSSSMPE) are enriched in polar residues. Low complexity-rich tracts occupy residues 184–197 (SSDN…QNKS) and 221–234 (LRTL…TTST).

It belongs to the Ninja family.

The protein resides in the nucleus. This Triticum aestivum (Wheat) protein is Ninja-family protein 1 (AFP-A1).